The sequence spans 576 residues: TRAF-type zinc finger domain-containing protein 1 (576 aa).

Alanine 2 carries the post-translational modification N-acetylalanine. The segment at 27 to 103 (IHEIHCQRNI…DLELSVVKLK (77 aa)) adopts a TRAF-type zinc-finger fold. Phosphoserine is present on residues serine 278, serine 320, serine 326, serine 327, serine 409, serine 415, serine 430, and serine 450. Residues 402–432 (EGIPTQDSQPEDRSPELSRRRVKHQGDLSSG) form a disordered region. Basic and acidic residues predominate over residues 411 to 420 (PEDRSPELSR). 2 disordered regions span residues 465-491 (LNSSGPRSDCQRSPPGVLKLNNSGSQD) and 529-576 (HGSP…EEEE). Serine 531 is subject to Phosphoserine. The segment covering 540–552 (GSRSSRVTPTAAS) has biased composition (polar residues).

In terms of assembly, interacts with MAVS, TICAM1, TRAF1, TRAF2, TRAF3 and TRAF6. As to expression, expressed in vascular smooth muscle cells.

Functionally, negative feedback regulator that controls excessive innate immune responses. Regulates both Toll-like receptor 4 (TLR4) and DDX58/RIG1-like helicases (RLH) pathways. May inhibit the LTR pathway by direct interaction with TRAF6 and attenuation of NF-kappa-B activation. May negatively regulate the RLH pathway downstream from MAVS and upstream of NF-kappa-B and IRF3. The sequence is that of TRAF-type zinc finger domain-containing protein 1 (Trafd1) from Rattus norvegicus (Rat).